A 338-amino-acid chain; its full sequence is Methionine synthase (338 aa).

Residues H210, C212, E234, and C294 each coordinate Zn(2+).

This sequence belongs to the archaeal MetE family. The cofactor is Zn(2+).

It functions in the pathway amino-acid biosynthesis; L-methionine biosynthesis via de novo pathway. Catalyzes the transfer of a methyl group to L-homocysteine resulting in methionine formation. The physiological methyl donor is unknown. This Pyrococcus horikoshii (strain ATCC 700860 / DSM 12428 / JCM 9974 / NBRC 100139 / OT-3) protein is Methionine synthase.